A 292-amino-acid polypeptide reads, in one-letter code: Mitochondrial fission regulator 1-like (292 aa).

Threonine 30 is subject to Phosphothreonine. A Phosphoserine modification is found at serine 41. Serine 103 is modified (phosphoserine; by AMPK). Phosphoserine occurs at positions 110, 224, and 225. Serine 238 bears the Phosphoserine; by AMPK mark. Serine 261 and serine 273 each carry phosphoserine.

This sequence belongs to the MTFR1 family. Phosphorylated by AMPK. Upon stress, phosphorylation at Ser-103 and Ser-238 by AMPK is sufficient to induce mitochondrial fragmentation.

The protein resides in the mitochondrion outer membrane. Functionally, mitochondrial protein required for adaptation of miochondrial dynamics to metabolic changes. Regulates mitochondrial morphology at steady state and mediates AMPK-dependent stress-induced mitochondrial fragmentation via the control of OPA1 levels. The chain is Mitochondrial fission regulator 1-like from Homo sapiens (Human).